The primary structure comprises 401 residues: Dihydrolipoyllysine-residue succinyltransferase component of 2-oxoglutarate dehydrogenase complex (401 aa).

In terms of domain architecture, Lipoyl-binding spans 2-77 (SVKIIVPSLG…AVGEEIGEIN (76 aa)). K43 is modified (N6-lipoyllysine). Residues 115 to 152 (ILAPSVQKLVTENKLDPNNIKGTGRDGRITKGDVLETI) enclose the Peripheral subunit-binding (PSBD) domain. Catalysis depends on residues H372 and D376.

This sequence belongs to the 2-oxoacid dehydrogenase family. Forms a 24-polypeptide structural core with octahedral symmetry. Part of the 2-oxoglutarate dehydrogenase (OGDH) complex composed of E1 (2-oxoglutarate dehydrogenase), E2 (dihydrolipoamide succinyltransferase) and E3 (dihydrolipoamide dehydrogenase); the complex contains multiple copies of the three enzymatic components (E1, E2 and E3). (R)-lipoate serves as cofactor.

The catalysed reaction is N(6)-[(R)-dihydrolipoyl]-L-lysyl-[protein] + succinyl-CoA = N(6)-[(R)-S(8)-succinyldihydrolipoyl]-L-lysyl-[protein] + CoA. It functions in the pathway amino-acid degradation; L-lysine degradation via saccharopine pathway; glutaryl-CoA from L-lysine: step 6/6. Its function is as follows. E2 component of the 2-oxoglutarate dehydrogenase (OGDH) complex which catalyzes the second step in the conversion of 2-oxoglutarate to succinyl-CoA and CO(2). The protein is Dihydrolipoyllysine-residue succinyltransferase component of 2-oxoglutarate dehydrogenase complex (sucB) of Rickettsia felis (strain ATCC VR-1525 / URRWXCal2) (Rickettsia azadi).